The primary structure comprises 475 residues: tRNA-2-methylthio-N(6)-dimethylallyladenosine synthase (475 aa).

Positions Met1–Ala20 are disordered. One can recognise an MTTase N-terminal domain in the interval Lys25–Ala145. The [4Fe-4S] cluster site is built by Cys34, Cys70, Cys108, Cys186, Cys190, and Cys193. A Radical SAM core domain is found at Arg172–Ala404. A TRAM domain is found at Glu407–Gly469.

Belongs to the methylthiotransferase family. MiaB subfamily. Monomer. The cofactor is [4Fe-4S] cluster.

It is found in the cytoplasm. It carries out the reaction N(6)-dimethylallyladenosine(37) in tRNA + (sulfur carrier)-SH + AH2 + 2 S-adenosyl-L-methionine = 2-methylsulfanyl-N(6)-dimethylallyladenosine(37) in tRNA + (sulfur carrier)-H + 5'-deoxyadenosine + L-methionine + A + S-adenosyl-L-homocysteine + 2 H(+). In terms of biological role, catalyzes the methylthiolation of N6-(dimethylallyl)adenosine (i(6)A), leading to the formation of 2-methylthio-N6-(dimethylallyl)adenosine (ms(2)i(6)A) at position 37 in tRNAs that read codons beginning with uridine. This chain is tRNA-2-methylthio-N(6)-dimethylallyladenosine synthase, found in Chelativorans sp. (strain BNC1).